We begin with the raw amino-acid sequence, 713 residues long: Cytosolic endo-beta-N-acetylglucosaminidase (713 aa).

The disordered stretch occupies residues 1–36; it reads MIARKRKSNGSETTSGKIPKDDVSSESCLDQPADES. The 93-residue stretch at 270 to 362 folds into the BRCT domain; it reads FFDACDGFFT…DFRQNQDKFW (93 aa).

It belongs to the glycosyl hydrolase 85 family.

The protein resides in the cytoplasm. Its subcellular location is the cytosol. The catalysed reaction is an N(4)-(oligosaccharide-(1-&gt;3)-[oligosaccharide-(1-&gt;6)]-beta-D-Man-(1-&gt;4)-beta-D-GlcNAc-(1-&gt;4)-alpha-D-GlcNAc)-L-asparaginyl-[protein] + H2O = an oligosaccharide-(1-&gt;3)-[oligosaccharide-(1-&gt;6)]-beta-D-Man-(1-&gt;4)-D-GlcNAc + N(4)-(N-acetyl-beta-D-glucosaminyl)-L-asparaginyl-[protein]. In terms of biological role, endoglycosidase that releases N-glycans from glycoproteins by cleaving the beta-1,4-glycosidic bond in the N,N'-diacetylchitobiose core. Involved in the processing of free oligosaccharides in the cytosol. The polypeptide is Cytosolic endo-beta-N-acetylglucosaminidase (engase) (Danio rerio (Zebrafish)).